Consider the following 112-residue polypeptide: Nucleoid-associated protein BCI_0116 (112 aa).

Belongs to the YbaB/EbfC family. Homodimer.

It localises to the cytoplasm. It is found in the nucleoid. Binds to DNA and alters its conformation. May be involved in regulation of gene expression, nucleoid organization and DNA protection. The sequence is that of Nucleoid-associated protein BCI_0116 from Baumannia cicadellinicola subsp. Homalodisca coagulata.